The following is a 222-amino-acid chain: Large ribosomal subunit protein uL1 (222 aa).

The protein belongs to the universal ribosomal protein uL1 family. As to quaternary structure, part of the 50S ribosomal subunit.

In terms of biological role, binds directly to 23S rRNA. Probably involved in E site tRNA release. Its function is as follows. Protein L1 is also a translational repressor protein, it controls the translation of its operon by binding to its mRNA. In Pyrobaculum aerophilum (strain ATCC 51768 / DSM 7523 / JCM 9630 / CIP 104966 / NBRC 100827 / IM2), this protein is Large ribosomal subunit protein uL1.